The following is a 918-amino-acid chain: Rap guanine nucleotide exchange factor 3 (918 aa).

S79 carries the post-translational modification Phosphoserine. The region spanning 110–186 (ATYPTLIRDR…RDAQFYRFPG (77 aa)) is the DEP domain. The interval 218 to 242 (TVALRKPPGQRTDEELDLIFEELLH) is interaction with PDE3B. 3',5'-cyclic AMP is bound by residues 311–314 (GQLA) and 321–322 (RA). The tract at residues 369-388 (TSQGAGPSRPPTPGRNRYTV) is disordered. The N-terminal Ras-GEF domain occupies 384 to 521 (NRYTVMSGTP…EQYPERRRHH (138 aa)). The interval 398–422 (ELLLEAMRPDSSAHDPTETFLSDFL) is interaction with PDE3B. Phosphoserine occurs at positions 531 and 859. The 220-residue stretch at 665–884 (SAKDLAGQLT…SRISTCSEQS (220 aa)) folds into the Ras-GEF domain.

Interacts with PDE3B and PIK3R6; form a signaling complex that regulates phosphatidylinositol 3-kinase gamma in angiogenesis.

It localises to the cytoplasm. It is found in the membrane. Its function is as follows. Guanine nucleotide exchange factor (GEF) for RAP1A and RAP2A small GTPases that is activated by binding cAMP. Through simultaneous binding of PDE3B to RAPGEF3 and PIK3R6 is assembled in a signaling complex in which it activates the PI3K gamma complex and which is involved in angiogenesis. Plays a role in the modulation of the cAMP-induced dynamic control of endothelial barrier function through a pathway that is independent on Rho-mediated signaling. Required for the actin rearrangement at cell-cell junctions, such as stress fibers and junctional actin. The protein is Rap guanine nucleotide exchange factor 3 (Rapgef3) of Mus musculus (Mouse).